Consider the following 324-residue polypeptide: uncharacterized protein (324 aa).

Positions 1-58 constitute an HTH lysR-type domain; sequence MDIKVMEYAAEIARRQSFTKAAEHLHIAQPSLSQQIKKLEAELGLTLFHRSHGSVTLT. The segment at residues 18 to 37 is a DNA-binding region (H-T-H motif); sequence FTKAAEHLHIAQPSLSQQIK.

The protein belongs to the LysR transcriptional regulatory family.

This is an uncharacterized protein from Bacillus subtilis (strain 168).